A 251-amino-acid polypeptide reads, in one-letter code: Cholesterol 25-hydroxylase-like protein (251 aa).

The next 3 membrane-spanning stretches (helical) occupy residues 22-42 (FFPV…FVLL), 69-89 (WSCL…LSVL), and 108-128 (VVWD…VWHL). Residues 113-247 (AACLLLFDFQ…FTHWDKLFGT (135 aa)) form the Fatty acid hydroxylase domain. The Histidine box-1 motif lies at 126-130 (WHLLH). Residues 141–145 (HKVHH) carry the Histidine box-2 motif. The Histidine box-3 signature appears at 222–228 (HHDVHHQ).

This sequence belongs to the sterol desaturase family. Requires Fe cation as cofactor.

The protein resides in the endoplasmic reticulum membrane. The enzyme catalyses cholesterol + AH2 + O2 = 25-hydroxycholesterol + A + H2O. The catalysed reaction is cholesterol + NADPH + O2 + H(+) = 25-hydroxycholesterol + NADP(+) + H2O. Functionally, catalyzes the formation of 25-hydroxycholesterol from cholesterol, leading to repress cholesterol biosynthetic enzymes. Plays a key role in cell positioning and movement in lymphoid tissues: 25-hydroxycholesterol is an intermediate in biosynthesis of 7-alpha,25-dihydroxycholesterol (7-alpha,25-OHC), an oxysterol that acts as a ligand for the G protein-coupled receptor GPR183/EBI2, a chemotactic receptor for a number of lymphoid cells. May play an important role in regulating lipid metabolism by synthesizing a corepressor that blocks sterol regulatory element binding protein (SREBP) processing. In testis, production of 25-hydroxycholesterol by macrophages may play a role in Leydig cell differentiation. This is Cholesterol 25-hydroxylase-like protein (ch25h) from Danio rerio (Zebrafish).